We begin with the raw amino-acid sequence, 373 residues long: Histidinol-phosphate aminotransferase 2 (373 aa).

Lys-229 carries the post-translational modification N6-(pyridoxal phosphate)lysine.

This sequence belongs to the class-II pyridoxal-phosphate-dependent aminotransferase family. Histidinol-phosphate aminotransferase subfamily. In terms of assembly, homodimer. It depends on pyridoxal 5'-phosphate as a cofactor.

The enzyme catalyses L-histidinol phosphate + 2-oxoglutarate = 3-(imidazol-4-yl)-2-oxopropyl phosphate + L-glutamate. The protein operates within amino-acid biosynthesis; L-histidine biosynthesis; L-histidine from 5-phospho-alpha-D-ribose 1-diphosphate: step 7/9. This is Histidinol-phosphate aminotransferase 2 from Hydrogenovibrio crunogenus (strain DSM 25203 / XCL-2) (Thiomicrospira crunogena).